The chain runs to 253 residues: Tetraspanin-11 (253 aa).

3 helical membrane passes run 19–39 (LLFV…AVGI), 63–83 (ILIF…GAIL), and 93–113 (YFCL…LAHV). The N-linked (GlcNAc...) asparagine glycan is linked to N127. A helical membrane pass occupies residues 220 to 240 (LLLMGAVGIGVACLQICGMVL).

The protein belongs to the tetraspanin (TM4SF) family.

The protein resides in the membrane. This Homo sapiens (Human) protein is Tetraspanin-11 (TSPAN11).